The primary structure comprises 284 residues: Pantothenate synthetase (284 aa).

30-37 is a binding site for ATP; it reads MGNLHDGH. The Proton donor role is filled by H37. Q61 is a binding site for (R)-pantoate. Residue Q61 participates in beta-alanine binding. 149–152 lines the ATP pocket; sequence GEKD. Residue Q155 coordinates (R)-pantoate. ATP-binding positions include I178 and 186-189; that span reads LSSR.

It belongs to the pantothenate synthetase family. In terms of assembly, homodimer.

The protein localises to the cytoplasm. It carries out the reaction (R)-pantoate + beta-alanine + ATP = (R)-pantothenate + AMP + diphosphate + H(+). The protein operates within cofactor biosynthesis; (R)-pantothenate biosynthesis; (R)-pantothenate from (R)-pantoate and beta-alanine: step 1/1. In terms of biological role, catalyzes the condensation of pantoate with beta-alanine in an ATP-dependent reaction via a pantoyl-adenylate intermediate. This is Pantothenate synthetase from Salmonella typhi.